The following is a 334-amino-acid chain: Phosphate acyltransferase (334 aa).

It belongs to the PlsX family. In terms of assembly, homodimer. Probably interacts with PlsY.

The protein resides in the cytoplasm. The enzyme catalyses a fatty acyl-[ACP] + phosphate = an acyl phosphate + holo-[ACP]. Its pathway is lipid metabolism; phospholipid metabolism. Its function is as follows. Catalyzes the reversible formation of acyl-phosphate (acyl-PO(4)) from acyl-[acyl-carrier-protein] (acyl-ACP). This enzyme utilizes acyl-ACP as fatty acyl donor, but not acyl-CoA. The chain is Phosphate acyltransferase from Streptococcus thermophilus (strain ATCC BAA-491 / LMD-9).